Reading from the N-terminus, the 359-residue chain is Cyclic AMP response element-binding protein B (359 aa).

2 disordered regions span residues 1-73 and 185-238; these read MDNS…AQGG and VRNK…FTEI. Residues 9–32 show a composition bias toward low complexity; sequence NGNSSAASGSNDVVDVVAQQAAAA. Positions 33 to 47 are enriched in gly residues; that stretch reads VGGGGGGGGGGGGGN. Residues 48–70 show a composition bias toward low complexity; it reads PQQQQQNPQSTTAGGPTGATNNA. Positions 198-257 constitute a KID domain; it reads KPEPNTQHPEDSDESLSDDDSQHHRSELTRRPSYNKIFTEISGPDMSGASLPMSDGVLNS. Residues serine 209, serine 212, and serine 214 each carry the phosphoserine modification. The segment covering 217–227 has biased composition (basic and acidic residues); sequence DSQHHRSELTR. The bZIP domain maps to 300-359; sequence TRKREIRLQKNREAARECRRKKKEYIKCLENRVAVLENQNKALIEELKSLKELYCQTKND. The interval 301 to 326 is basic motif; that stretch reads RKREIRLQKNREAARECRRKKKEYIK. A leucine-zipper region spans residues 328–349; it reads LENRVAVLENQNKALIEELKSL.

The protein belongs to the bZIP family. ATF subfamily. As to quaternary structure, homodimer. As to expression, most cells of the adult brain; cell bodies, but not neuropil.

It is found in the nucleus. Functionally, isoform E is a PKA-dependent transcriptional activator. Isoform J is a direct antagonist of activation by isoform E in cell culture. Binds the cAMP response element (CRE) (consensus: 5'-GTGACGT[AC][AG]-3'), a sequence present in many viral and cellular promoters. Has a role in long-term memory. This chain is Cyclic AMP response element-binding protein B, found in Drosophila melanogaster (Fruit fly).